The primary structure comprises 535 residues: MGMFFNLRSNIKKKAMDNGLSLPISRNGSSNNIKDKRSEHNSNSLKGKYRYQPRSTPSKFQLTVSITSLIIIAVLSLYLFISFLSGMGIGVSTQNGRSLLGSSKSSENYKTIDLEDEEYYDYDFEDIDPEVISKFDDGVQHYLISQFGSEVLTPKDDEKYQRELNMLFDSTVEEYDLSNFEGAPNGLETRDHILLCIPLRNAADVLPLMFKHLMNLTYPHELIDLAFLVSDCSEGDTTLDALIAYSRHLQNGTLSQIFQEIDAVIDSQTKGTDKLYLKYMDEGYINRVHQAFSPPFHENYDKPFRSVQIFQKDFGQVIGQGFSDRHAVKVQGIRRKLMGRARNWLTANALKPYHSWVYWRDADVELCPGSVIQDLMSKNYDVIVPNVWRPLPTFLGTEQPYDLNSWMESQEALALAKTLDEDDVIVEGYAEYPTWRVHLAYIRDAEGDPNEAVDLDGVGGVSILAKAKIFRNGVQFPAFTFENHAETEAFGKMAKKMGYRVGGLPHYTIWHIYEPSDDDLKEIASREREKRRQSE.

The Cytoplasmic segment spans residues 1 to 64 (MGMFFNLRSN…STPSKFQLTV (64 aa)). Positions 22 to 48 (LPISRNGSSNNIKDKRSEHNSNSLKGK) are disordered. The residue at position 25 (Ser25) is a Phosphoserine. The chain crosses the membrane as a helical; Signal-anchor for type II membrane protein span at residues 65 to 81 (SITSLIIIAVLSLYLFI). Residues 82 to 535 (SFLSGMGIGV…REREKRRQSE (454 aa)) lie on the Lumenal side of the membrane. 2 N-linked (GlcNAc...) asparagine glycosylation sites follow: Asn215 and Asn251.

The protein belongs to the ANP1/MMN9/VAN1 family. In terms of assembly, component of the M-Pol I complex which contains MNN9 and VAN1. In terms of processing, glycosylated.

It localises to the endoplasmic reticulum membrane. Its subcellular location is the golgi apparatus membrane. In terms of biological role, involved in regulation of the phosphorylation of a number of proteins, some of which appear to be important in cell growth control. The M-Pol I complex possesses alpha-1,6-mannosyltransferase activity and is probably involved in the elongation of the mannan backbone of N-linked glycans on cell wall and periplasmic proteins. The polypeptide is Mannan polymerase I complex VAN1 subunit (VAN1) (Saccharomyces cerevisiae (strain ATCC 204508 / S288c) (Baker's yeast)).